Reading from the N-terminus, the 221-residue chain is Guanylate kinase (221 aa).

The Guanylate kinase-like domain occupies Gly-20–Gln-198. An ATP-binding site is contributed by Ala-27–Ser-34.

The protein belongs to the guanylate kinase family.

The protein resides in the cytoplasm. The enzyme catalyses GMP + ATP = GDP + ADP. Functionally, essential for recycling GMP and indirectly, cGMP. The chain is Guanylate kinase from Ralstonia nicotianae (strain ATCC BAA-1114 / GMI1000) (Ralstonia solanacearum).